A 519-amino-acid chain; its full sequence is Histidine--tRNA ligase (519 aa).

It belongs to the class-II aminoacyl-tRNA synthetase family. Homodimer.

The protein localises to the cytoplasm. It carries out the reaction tRNA(His) + L-histidine + ATP = L-histidyl-tRNA(His) + AMP + diphosphate + H(+). The polypeptide is Histidine--tRNA ligase (Roseobacter denitrificans (strain ATCC 33942 / OCh 114) (Erythrobacter sp. (strain OCh 114))).